The following is a 323-amino-acid chain: Transcription factor MafB (323 aa).

Lysine 32 participates in a covalent cross-link: Glycyl lysine isopeptide (Lys-Gly) (interchain with G-Cter in SUMO). Positions 34 to 43 are enriched in basic and acidic residues; it reads EPLGRAERPG. Disordered regions lie at residues 34–78 and 116–210; these read EPLG…PTEP and PVPQ…VEDR. Low complexity predominate over residues 54–77; it reads SVSSTPLSTPCSSVPSSPSFSPTE. Basic residues-rich tracts occupy residues 129 to 143 and 159 to 168; these read SAHH…HPHH and AHPHHHHHHQ. The segment covering 192 to 201 has biased composition (low complexity); the sequence is PHATAAATAA. A basic motif region spans residues 238-263; it reads RLKQKRRTLKNRGYAQSCRYKRVQQK. In terms of domain architecture, bZIP spans 238–301; it reads RLKQKRRTLK…DAYKVKCEKL (64 aa). Residues 266 to 287 form a leucine-zipper region; sequence LENEKTQLIQQVEQLKQEVSRL. Lysine 297 is covalently cross-linked (Glycyl lysine isopeptide (Lys-Gly) (interchain with G-Cter in SUMO)).

This sequence belongs to the bZIP family. Maf subfamily. As to quaternary structure, homodimer or heterodimer with other bHLH-Zip transcription factors. Forms homodimers and heterodimers with FOS, FOSB and FOSL2, but not with JUN proteins (JUN, JUNB and JUND). Interacts with the intracellular cytoplasmic domain of LRP1 (LRPICD); the interaction results in a moderate reduction of MAFB transcriptional potential. Binds DNA as a homodimer or a heterodimer. Interacts with PAX6; the interaction is direct. Interacts with ETS1 and LRP1. Post-translationally, sumoylated. Sumoylation on Lys-32 and Lys-297 stimulates its transcriptional repression activity and promotes macrophage differentiation from myeloid progenitors. Expressed in pancreatic alpha-cells (glucagon-positive cells), in podocytes of the kidney and macrophages (at protein level). Most abundant in kidney, gut, lung and brain.

The protein localises to the nucleus. Acts as a transcriptional activator or repressor. Plays a pivotal role in regulating lineage-specific hematopoiesis by repressing ETS1-mediated transcription of erythroid-specific genes in myeloid cells. Required for monocytic, macrophage, osteoclast, podocyte and islet beta cell differentiation. Involved in renal tubule survival and F4/80 maturation. Activates the insulin and glucagon promoters. Together with PAX6, transactivates weakly the glucagon gene promoter through the G1 element. SUMO modification controls its transcriptional activity and ability to specify macrophage fate. Binds element G1 on the glucagon promoter. Involved either as an oncogene or as a tumor suppressor, depending on the cell context. Required for the transcriptional activation of HOXB3 in the rhombomere r5 in the hindbrain. The chain is Transcription factor MafB (Mafb) from Mus musculus (Mouse).